The sequence spans 245 residues: Probable phosphatase NT01EI_1577 (245 aa).

9 residues coordinate Zn(2+): His-7, His-9, His-15, His-40, Glu-73, His-101, His-131, Asp-192, and His-194.

The protein belongs to the PHP family. As to quaternary structure, homotrimer. The cofactor is Zn(2+).

This chain is Probable phosphatase NT01EI_1577, found in Edwardsiella ictaluri (strain 93-146).